A 226-amino-acid polypeptide reads, in one-letter code: Putative N-acetylmannosamine-6-phosphate 2-epimerase 1 (226 aa).

This sequence belongs to the NanE family.

It catalyses the reaction an N-acyl-D-glucosamine 6-phosphate = an N-acyl-D-mannosamine 6-phosphate. It participates in amino-sugar metabolism; N-acetylneuraminate degradation; D-fructose 6-phosphate from N-acetylneuraminate: step 3/5. In terms of biological role, converts N-acetylmannosamine-6-phosphate (ManNAc-6-P) to N-acetylglucosamine-6-phosphate (GlcNAc-6-P). The polypeptide is Putative N-acetylmannosamine-6-phosphate 2-epimerase 1 (Salmonella paratyphi A (strain ATCC 9150 / SARB42)).